A 232-amino-acid polypeptide reads, in one-letter code: Gene 65 protein (232 aa).

The sequence is that of Gene 65 protein (65) from Mycobacterium phage D29 (Mycobacteriophage D29).